The primary structure comprises 398 residues: Acetate kinase (398 aa).

Asparagine 9 is a Mg(2+) binding site. Lysine 16 contacts ATP. Arginine 90 is a binding site for substrate. Residue aspartate 147 is the Proton donor/acceptor of the active site. ATP is bound by residues 207 to 211 (HIGNG), 282 to 284 (DLR), and 330 to 334 (GVGEN). Position 384 (glutamate 384) interacts with Mg(2+).

It belongs to the acetokinase family. As to quaternary structure, homodimer. Requires Mg(2+) as cofactor. The cofactor is Mn(2+).

The protein localises to the cytoplasm. The catalysed reaction is acetate + ATP = acetyl phosphate + ADP. It functions in the pathway metabolic intermediate biosynthesis; acetyl-CoA biosynthesis; acetyl-CoA from acetate: step 1/2. In terms of biological role, catalyzes the formation of acetyl phosphate from acetate and ATP. Can also catalyze the reverse reaction. In Staphylococcus haemolyticus (strain JCSC1435), this protein is Acetate kinase.